The sequence spans 404 residues: Chorismate synthase (404 aa).

NADP(+) contacts are provided by R40 and R46. Residues 133-135, 266-267, G313, 328-332, and R354 contribute to the FMN site; these read RSS, QA, and KPIPT. The segment at 283-320 is disordered; the sequence is PGSQVHDPIEPREDGAQAYPRRTNHAGGTEGGTTTGMP. The interval 337–357 is disordered; sequence LDSVDTATGEPEPTRYERSDI.

The protein belongs to the chorismate synthase family. In terms of assembly, homotetramer. Requires FMNH2 as cofactor.

The enzyme catalyses 5-O-(1-carboxyvinyl)-3-phosphoshikimate = chorismate + phosphate. Its pathway is metabolic intermediate biosynthesis; chorismate biosynthesis; chorismate from D-erythrose 4-phosphate and phosphoenolpyruvate: step 7/7. Catalyzes the anti-1,4-elimination of the C-3 phosphate and the C-6 proR hydrogen from 5-enolpyruvylshikimate-3-phosphate (EPSP) to yield chorismate, which is the branch point compound that serves as the starting substrate for the three terminal pathways of aromatic amino acid biosynthesis. This reaction introduces a second double bond into the aromatic ring system. The polypeptide is Chorismate synthase (Salinibacter ruber (strain DSM 13855 / M31)).